The sequence spans 85 residues: Large ribosomal subunit protein bL31B (85 aa).

Belongs to the bacterial ribosomal protein bL31 family. Type B subfamily. Part of the 50S ribosomal subunit.

In Pseudarthrobacter chlorophenolicus (strain ATCC 700700 / DSM 12829 / CIP 107037 / JCM 12360 / KCTC 9906 / NCIMB 13794 / A6) (Arthrobacter chlorophenolicus), this protein is Large ribosomal subunit protein bL31B.